The primary structure comprises 154 residues: Myoglobin (154 aa).

The Globin domain maps to 2-148 (VLSDAEWQLV…FRKDIAAKYK (147 aa)). S4 carries the phosphoserine modification. H65 contributes to the nitrite binding site. O2 is bound at residue H65. T68 carries the post-translational modification Phosphothreonine. H94 lines the heme b pocket.

The protein belongs to the globin family. In terms of assembly, monomeric.

Its subcellular location is the cytoplasm. It is found in the sarcoplasm. The catalysed reaction is Fe(III)-heme b-[protein] + nitric oxide + H2O = Fe(II)-heme b-[protein] + nitrite + 2 H(+). It catalyses the reaction H2O2 + AH2 = A + 2 H2O. Monomeric heme protein which primary function is to store oxygen and facilitate its diffusion within muscle tissues. Reversibly binds oxygen through a pentacoordinated heme iron and enables its timely and efficient release as needed during periods of heightened demand. Depending on the oxidative conditions of tissues and cells, and in addition to its ability to bind oxygen, it also has a nitrite reductase activity whereby it regulates the production of bioactive nitric oxide. Under stress conditions, like hypoxia and anoxia, it also protects cells against reactive oxygen species thanks to its pseudoperoxidase activity. In Eschrichtius robustus (California gray whale), this protein is Myoglobin (MB).